The chain runs to 161 residues: MYMLNESTKEILKKPFGKVYKELPPINRKVNIIAVGDITTKNLLSKSIIPNLSIIDLKTKRNIPVKINHKFKTVFEVNNPQGCISDEAEETIKYISSLDMVDTALIVKDGEEDLLTMMVIRYFPKDTIVLYGQPDEGVVLLTINQDLKHKINNILSMMDKI.

Residues D37, I38, D56, K58, E112, and D135 each coordinate GTP.

Belongs to the GTP-dependent DPCK family.

The enzyme catalyses 3'-dephospho-CoA + GTP = GDP + CoA + H(+). It participates in cofactor biosynthesis; coenzyme A biosynthesis. Catalyzes the GTP-dependent phosphorylation of the 3'-hydroxyl group of dephosphocoenzyme A to form coenzyme A (CoA). This Methanococcus aeolicus (strain ATCC BAA-1280 / DSM 17508 / OCM 812 / Nankai-3) protein is GTP-dependent dephospho-CoA kinase.